A 413-amino-acid chain; its full sequence is Arginine biosynthesis bifunctional protein ArgJ (413 aa).

The substrate site is built by threonine 158, lysine 184, threonine 195, glutamate 285, asparagine 408, and serine 413. Threonine 195 (nucleophile) is an active-site residue.

It belongs to the ArgJ family. Heterotetramer of two alpha and two beta chains.

The protein resides in the cytoplasm. The catalysed reaction is N(2)-acetyl-L-ornithine + L-glutamate = N-acetyl-L-glutamate + L-ornithine. It carries out the reaction L-glutamate + acetyl-CoA = N-acetyl-L-glutamate + CoA + H(+). It functions in the pathway amino-acid biosynthesis; L-arginine biosynthesis; L-ornithine and N-acetyl-L-glutamate from L-glutamate and N(2)-acetyl-L-ornithine (cyclic): step 1/1. The protein operates within amino-acid biosynthesis; L-arginine biosynthesis; N(2)-acetyl-L-ornithine from L-glutamate: step 1/4. Functionally, catalyzes two activities which are involved in the cyclic version of arginine biosynthesis: the synthesis of N-acetylglutamate from glutamate and acetyl-CoA as the acetyl donor, and of ornithine by transacetylation between N(2)-acetylornithine and glutamate. In Rhizobium meliloti (strain 1021) (Ensifer meliloti), this protein is Arginine biosynthesis bifunctional protein ArgJ.